A 286-amino-acid polypeptide reads, in one-letter code: Putative cyclin-H (286 aa).

The region spanning 79-148 is the Cyclin N-terminal domain; that stretch reads AIIYIKRFYL…ILESLNFNLI (70 aa). The segment at 235–286 is disordered; the sequence is NNNNNNNNNNNNNNNNNNNNNNNNNNNNNNNNNNNNNNNNNNNNNNNNNLLL.

The protein belongs to the cyclin family. Cyclin C subfamily.

The protein resides in the nucleus. In terms of biological role, may regulate cdk7 involved in transcription regulation and cell cycle progression. This is Putative cyclin-H (cycH) from Dictyostelium discoideum (Social amoeba).